An 87-amino-acid chain; its full sequence is Developmentally-regulated ectodermal protein (87 aa).

An N-terminal signal peptide occupies residues 1–16 (MKRLLVLTLVSAILMA).

The polypeptide is Developmentally-regulated ectodermal protein (Tripneustes gratilla (Hawaian sea urchin)).